A 396-amino-acid chain; its full sequence is Elongation factor Tu (396 aa).

The 197-residue stretch at 10 to 206 (KPHVNVGTIG…ALDSYIPTPE (197 aa)) folds into the tr-type G domain. Positions 19 to 26 (GHVDHGKT) are G1. GTP is bound at residue 19-26 (GHVDHGKT). T26 contributes to the Mg(2+) binding site. Positions 60-64 (GITIN) are G2. The G3 stretch occupies residues 81-84 (DCPG). GTP is bound by residues 81–85 (DCPGH) and 136–139 (NKCD). Residues 136–139 (NKCD) are G4. Residues 174-176 (SAL) are G5.

It belongs to the TRAFAC class translation factor GTPase superfamily. Classic translation factor GTPase family. EF-Tu/EF-1A subfamily. As to quaternary structure, monomer.

Its subcellular location is the cytoplasm. The enzyme catalyses GTP + H2O = GDP + phosphate + H(+). Functionally, GTP hydrolase that promotes the GTP-dependent binding of aminoacyl-tRNA to the A-site of ribosomes during protein biosynthesis. The protein is Elongation factor Tu of Aromatoleum aromaticum (strain DSM 19018 / LMG 30748 / EbN1) (Azoarcus sp. (strain EbN1)).